Here is a 315-residue protein sequence, read N- to C-terminus: Methionyl-tRNA formyltransferase (315 aa).

Residue 113–116 (SLLP) participates in (6S)-5,6,7,8-tetrahydrofolate binding.

Belongs to the Fmt family.

It carries out the reaction L-methionyl-tRNA(fMet) + (6R)-10-formyltetrahydrofolate = N-formyl-L-methionyl-tRNA(fMet) + (6S)-5,6,7,8-tetrahydrofolate + H(+). Attaches a formyl group to the free amino group of methionyl-tRNA(fMet). The formyl group appears to play a dual role in the initiator identity of N-formylmethionyl-tRNA by promoting its recognition by IF2 and preventing the misappropriation of this tRNA by the elongation apparatus. This Shigella dysenteriae serotype 1 (strain Sd197) protein is Methionyl-tRNA formyltransferase.